Consider the following 215-residue polypeptide: MTATVIFDLDGTLVNTEALYLKSNVKAAAVLGLHRTEADFRPLVGSAGPSEAKIIADLVGADHAAWFQQFSTQDVLDQIRSGADFVLPGADKTLQTLDQMGYRLALATSSAKHYVDVVLAATGWVKRFDPILTGSDVTAHKPDPEIYHVMKTKLPETPAIVVEDTHVGVAAAEGAGLPVVMIPGIGQGPDHKATAILAAAITDLPDWLQNHPTFA.

Belongs to the HAD-like hydrolase superfamily. CbbY/CbbZ/Gph/YieH family.

This is an uncharacterized protein from Lacticaseibacillus casei (Lactobacillus casei).